A 691-amino-acid polypeptide reads, in one-letter code: ATP-dependent zinc metalloprotease FtsH 2 (691 aa).

Positions 1–48 are disordered; the sequence is MTDEPQSDEQQTTEQERPLGTKRATRADGLRRPGVRSGLAERRSPAAD. The Cytoplasmic segment spans residues 1-64; the sequence is MTDEPQSDEQ…AAVRRFLLRD (64 aa). Residues 14–31 show a composition bias toward basic and acidic residues; sequence EQERPLGTKRATRADGLR. A helical transmembrane segment spans residues 65–85; the sequence is VFALGLMIAALVIVILFFTLL. Over 86–168 the chain is Extracellular; it reads GATKPTSSGT…AVKQQPGKAQ (83 aa). Residues 169–189 form a helical membrane-spanning segment; sequence VTIVVQFLLPILLLVCLFALF. The Cytoplasmic segment spans residues 190-691; that stretch reads MRIGQDGGAG…ERGSARDRDA (502 aa). 265-272 serves as a coordination point for ATP; the sequence is GPPGTGKT. His486 contributes to the Zn(2+) binding site. Glu487 is an active-site residue. His490 and Asp563 together coordinate Zn(2+).

It in the central section; belongs to the AAA ATPase family. In the C-terminal section; belongs to the peptidase M41 family. In terms of assembly, homohexamer. Zn(2+) is required as a cofactor.

The protein localises to the cell membrane. Acts as a processive, ATP-dependent zinc metallopeptidase for both cytoplasmic and membrane proteins. Plays a role in the quality control of integral membrane proteins. The polypeptide is ATP-dependent zinc metalloprotease FtsH 2 (Conexibacter woesei (strain DSM 14684 / CCUG 47730 / CIP 108061 / JCM 11494 / NBRC 100937 / ID131577)).